We begin with the raw amino-acid sequence, 318 residues long: Ribosomal RNA small subunit methyltransferase H (318 aa).

Residues Gly-42–His-44, Asp-62, Phe-86, Asp-108, and Gln-115 contribute to the S-adenosyl-L-methionine site.

The protein belongs to the methyltransferase superfamily. RsmH family.

It is found in the cytoplasm. It catalyses the reaction cytidine(1402) in 16S rRNA + S-adenosyl-L-methionine = N(4)-methylcytidine(1402) in 16S rRNA + S-adenosyl-L-homocysteine + H(+). Functionally, specifically methylates the N4 position of cytidine in position 1402 (C1402) of 16S rRNA. This chain is Ribosomal RNA small subunit methyltransferase H, found in Yersinia pestis (strain Pestoides F).